The sequence spans 446 residues: Vacuolar cation/proton exchanger 4 (446 aa).

The segment covering 1 to 16 (MSSISTESSSNLSLLE) has biased composition (low complexity). Residues 1–33 (MSSISTESSSNLSLLENGGGGSDKPTAETSRRV) form a disordered region. Residues 1–69 (MSSISTESSS…MRRILTNLQE (69 aa)) lie on the Cytoplasmic side of the membrane. Residues 70-90 (VLLGTKLFILFPAVPLAVVAH) form a helical membrane-spanning segment. At 91 to 96 (RYDCPR) the chain is on the extracellular side. The helical transmembrane segment at 97 to 117 (AWVFALSLLGLTPLAERISFL) threads the bilayer. The Cytoplasmic segment spans residues 118 to 128 (TEQIAFHTGPT). The chain crosses the membrane as a helical span at residues 129-149 (VGGLMNATCGNATEMIIAILA). Residues 138–173 (GNATEMIIAILAVGQRKMRIVKLSLLGSILSNLLFV) are cation selection. At 150-162 (VGQRKMRIVKLSL) the chain is on the extracellular side. Residues 163 to 183 (LGSILSNLLFVLGTSLFLGGI) form a helical membrane-spanning segment. Residues 184–196 (SNLRKHQSFDPRQ) are Cytoplasmic-facing. A helical membrane pass occupies residues 197–217 (GDMNSMLLYLALLCQTLPMIM). Residues 218–238 (RFTMEAEEYDGSDVVVLSRAS) are Extracellular-facing. A helical transmembrane segment spans residues 239-259 (SFVMLIAYLAFLIFHLFSSHL). The Cytoplasmic segment spans residues 260 to 285 (SPPPPPLPQREDVHDDDVSDKEEEGA). Residues 286–306 (VIGMWSAIFWLIIMTLLVALL) form a helical membrane-spanning segment. The Extracellular segment spans residues 307-319 (SDYLVSTIQDAAD). Residues 320–340 (SWGLSVGFIGIILLPIVGNAA) form a helical membrane-spanning segment. A cation selection region spans residues 337 to 372 (GNAAEHAGAVIFAFRNKLDITLGIALGSATQIALFV). Residues 341–359 (EHAGAVIFAFRNKLDITLG) are Cytoplasmic-facing. A helical transmembrane segment spans residues 360-380 (IALGSATQIALFVVPVTVLVA). Topologically, residues 381 to 388 (WTMGIEMD) are extracellular. The chain crosses the membrane as a helical span at residues 389–409 (LNFNLLETACFALSILVTSLV). The Cytoplasmic portion of the chain corresponds to 410–416 (LQDGTSN). A helical transmembrane segment spans residues 417-437 (YMKGLVLLLCYVVIAACFFVS). Topologically, residues 438–446 (NSPSSKLLF) are extracellular.

This sequence belongs to the Ca(2+):cation antiporter (CaCA) (TC 2.A.19) family. Cation/proton exchanger (CAX) subfamily. As to expression, expressed at low levels in all tissues.

The protein resides in the vacuole membrane. Functionally, vacuolar cation/proton exchanger (CAX). Translocates Ca(2+) and other metal ions into vacuoles using the proton gradient formed by H(+)-ATPase and H(+)-pyrophosphatase. Cation selectivity transport in tobacco root tonoplast vesicles is Cd(2+)&gt;Zn(2+)&gt;&gt;Ca(2+)&gt;&gt;&gt;Mn(2+). This Arabidopsis thaliana (Mouse-ear cress) protein is Vacuolar cation/proton exchanger 4 (CAX4).